A 115-amino-acid polypeptide reads, in one-letter code: Immunoglobulin kappa variable 5-2 (115 aa).

Positions 1–20 (MGSQVHLLSFLLLWISDTRA) are cleaved as a signal peptide. Residues 21–43 (ETTLTQSPAFMSATPGDKVNISC) are framework-1. Residues 22–115 (TTLTQSPAFM…YFCLQHDNFP (94 aa)) enclose the Ig-like domain. N40 carries N-linked (GlcNAc...) asparagine glycosylation. S42 bears the Phosphoserine mark. A disulfide bond links C43 and C108. A complementarity-determining-1 region spans residues 44–54 (KASQDIDDDMN). Residues 55–69 (WYQQKPGEAAIFIIQ) form a framework-2 region. Positions 70 to 76 (EATTLVP) are complementarity-determining-2. The interval 77 to 108 (GIPPRFSGSGYGTDFTLTINNIESEDAAYYFC) is framework-3. Residues 109-115 (LQHDNFP) form a complementarity-determining-3 region.

Immunoglobulins are composed of two identical heavy chains and two identical light chains; disulfide-linked.

The protein localises to the secreted. It localises to the cell membrane. Its function is as follows. V region of the variable domain of immunoglobulin light chains that participates in the antigen recognition. Immunoglobulins, also known as antibodies, are membrane-bound or secreted glycoproteins produced by B lymphocytes. In the recognition phase of humoral immunity, the membrane-bound immunoglobulins serve as receptors which, upon binding of a specific antigen, trigger the clonal expansion and differentiation of B lymphocytes into immunoglobulins-secreting plasma cells. Secreted immunoglobulins mediate the effector phase of humoral immunity, which results in the elimination of bound antigens. The antigen binding site is formed by the variable domain of one heavy chain, together with that of its associated light chain. Thus, each immunoglobulin has two antigen binding sites with remarkable affinity for a particular antigen. The variable domains are assembled by a process called V-(D)-J rearrangement and can then be subjected to somatic hypermutations which, after exposure to antigen and selection, allow affinity maturation for a particular antigen. The protein is Immunoglobulin kappa variable 5-2 of Homo sapiens (Human).